A 625-amino-acid chain; its full sequence is MKRKLDANNVPSPEDSAGKSITAHSFETLKLDPRLLQALTQQKFTKPTPIQAEAIPLALDGKDVLARAKTGSGKTAAYLLPVLQSILQQKRNTPAHKSISALILVPTRELAEQVHRTAISFSAFSGKHVRSVNLTQKVSDAVQRSLLADLPDIVVSTPARAVANVNSSALSLERLTHLVIDEADLVLSYGYEEDMQSLAKAVPRGVQTFLMSATFTSEVDTLKGLFCRNPVVLKLEEKEDEGAGISQFVVRRCAEDEKFLLTYVIFKLQLVKGKCIIFVGDVDRCYRLKLFLEQFGIRSCVLNSELPVNSRIHVVQEFNKGVYDIIIAVDDQEVLGELRKNSKKQPRKSDQCSRDSEYDGAQTSRNNDQYSSEDDAETQPSKRPKKSAKEKDYGISRGIDFQNVACVLNFDLPTTSKSYTHRIGRTGRAGKTGMALSFVIPSDQFGKHKPTSIPSAKHDEAMLSKIIKRQDKLGREVKPYHFDMKQVDAFRYRMSDALRAVTRVAVQEARAREIRQELVKSEKLKRHFEENPEELRQLRHDGELRAARVQAHLKHVPDYLMPTKGRGSLSIGTGADVGFVGFKKTHENVIRKAREKNKGRGRGGKAGRGGKRVDPLKSFNSGGKH.

The disordered stretch occupies residues 1–21 (MKRKLDANNVPSPEDSAGKSI). A Q motif motif is present at residues 24–52 (HSFETLKLDPRLLQALTQQKFTKPTPIQA). A Helicase ATP-binding domain is found at 55–233 (IPLALDGKDV…GLFCRNPVVL (179 aa)). Residue 68–75 (AKTGSGKT) coordinates ATP. The short motif at 181–184 (DEAD) is the DEAD box element. The region spanning 260–485 (LLTYVIFKLQ…EVKPYHFDMK (226 aa)) is the Helicase C-terminal domain. 2 disordered regions span residues 339-393 (RKNS…EKDY) and 590-625 (IRKA…GGKH). Residues 347-357 (RKSDQCSRDSE) show a composition bias toward basic and acidic residues. Residues 361–370 (AQTSRNNDQY) are compositionally biased toward polar residues. The span at 599 to 610 (GRGRGGKAGRGG) shows a compositional bias: basic residues.

It belongs to the DEAD box helicase family. DDX56/DBP9 subfamily.

The protein localises to the nucleus. It is found in the nucleolus. It catalyses the reaction ATP + H2O = ADP + phosphate + H(+). Functionally, ATP-binding RNA helicase involved in the biogenesis of 60S ribosomal subunits and is required for the normal formation of 25S and 5.8S rRNAs. The chain is ATP-dependent RNA helicase DBP9 (DBP9) from Ajellomyces capsulatus (strain NAm1 / WU24) (Darling's disease fungus).